The primary structure comprises 343 residues: Heat-inducible transcription repressor HrcA (343 aa).

Belongs to the HrcA family.

In terms of biological role, negative regulator of class I heat shock genes (grpE-dnaK-dnaJ and groELS operons). Prevents heat-shock induction of these operons. The polypeptide is Heat-inducible transcription repressor HrcA (Clostridium acetobutylicum (strain ATCC 824 / DSM 792 / JCM 1419 / IAM 19013 / LMG 5710 / NBRC 13948 / NRRL B-527 / VKM B-1787 / 2291 / W)).